The primary structure comprises 137 residues: Peptide methionine sulfoxide reductase MsrB (137 aa).

Residues 7–129 (PTENIEKLSD…NSASLNFVDD (123 aa)) enclose the MsrB domain. Zn(2+)-binding residues include Cys46, Cys49, Cys95, and Cys98. Cys118 (nucleophile) is an active-site residue.

The protein belongs to the MsrB Met sulfoxide reductase family. Requires Zn(2+) as cofactor.

The enzyme catalyses L-methionyl-[protein] + [thioredoxin]-disulfide + H2O = L-methionyl-(R)-S-oxide-[protein] + [thioredoxin]-dithiol. The chain is Peptide methionine sulfoxide reductase MsrB from Yersinia pseudotuberculosis serotype O:1b (strain IP 31758).